The sequence spans 934 residues: Phosphoenolpyruvate carboxylase (934 aa).

Catalysis depends on residues His-161 and Lys-593.

The protein belongs to the PEPCase type 1 family. It depends on Mg(2+) as a cofactor.

It catalyses the reaction oxaloacetate + phosphate = phosphoenolpyruvate + hydrogencarbonate. Functionally, forms oxaloacetate, a four-carbon dicarboxylic acid source for the tricarboxylic acid cycle. The chain is Phosphoenolpyruvate carboxylase (ppc) from Mycobacterium leprae (strain TN).